Reading from the N-terminus, the 192-residue chain is Superoxide dismutase [Fe] (192 aa).

Residues His27, His74, Asp157, and His161 each contribute to the Fe cation site.

Belongs to the iron/manganese superoxide dismutase family. As to quaternary structure, homodimer. Requires Fe cation as cofactor.

It catalyses the reaction 2 superoxide + 2 H(+) = H2O2 + O2. Destroys superoxide anion radicals which are normally produced within the cells and which are toxic to biological systems. The protein is Superoxide dismutase [Fe] (sodB) of Bordetella pertussis (strain Tohama I / ATCC BAA-589 / NCTC 13251).